The primary structure comprises 338 residues: Lipoate-protein ligase A (338 aa).

The 188-residue stretch at 29–216 (PATQRVLFLW…AFFAHYGERV (188 aa)) folds into the BPL/LPL catalytic domain. Residues arginine 71, 76-79 (GAVF), and lysine 134 contribute to the ATP site. Lysine 134 lines the (R)-lipoate pocket.

Belongs to the LplA family. In terms of assembly, monomer.

It localises to the cytoplasm. The enzyme catalyses L-lysyl-[lipoyl-carrier protein] + (R)-lipoate + ATP = N(6)-[(R)-lipoyl]-L-lysyl-[lipoyl-carrier protein] + AMP + diphosphate + H(+). It functions in the pathway protein modification; protein lipoylation via exogenous pathway; protein N(6)-(lipoyl)lysine from lipoate: step 1/2. The protein operates within protein modification; protein lipoylation via exogenous pathway; protein N(6)-(lipoyl)lysine from lipoate: step 2/2. In terms of biological role, catalyzes both the ATP-dependent activation of exogenously supplied lipoate to lipoyl-AMP and the transfer of the activated lipoyl onto the lipoyl domains of lipoate-dependent enzymes. The chain is Lipoate-protein ligase A from Salmonella agona (strain SL483).